We begin with the raw amino-acid sequence, 149 residues long: Myoglobin (149 aa).

The residue at position 2 (Ala-2) is an N-acetylalanine. Residues 2–143 (ADWDKVNSVW…ICSDIEKEYK (142 aa)) form the Globin domain. His-89 contacts heme b.

It belongs to the globin family. As to quaternary structure, monomeric.

It is found in the cytoplasm. The protein resides in the sarcoplasm. It carries out the reaction Fe(III)-heme b-[protein] + nitric oxide + H2O = Fe(II)-heme b-[protein] + nitrite + 2 H(+). It catalyses the reaction H2O2 + AH2 = A + 2 H2O. Functionally, monomeric heme protein which primary function is to store oxygen and facilitate its diffusion within muscle tissues. Reversibly binds oxygen through a pentacoordinated heme iron and enables its timely and efficient release as needed during periods of heightened demand. Depending on the oxidative conditions of tissues and cells, and in addition to its ability to bind oxygen, it also has a nitrite reductase activity whereby it regulates the production of bioactive nitric oxide. Under stress conditions, like hypoxia and anoxia, it also protects cells against reactive oxygen species thanks to its pseudoperoxidase activity. The protein is Myoglobin (mb) of Galeorhinus galeus (Tope shark).